The chain runs to 1372 residues: DNA-directed RNA polymerase subunit beta (1372 aa).

This sequence belongs to the RNA polymerase beta chain family. In terms of assembly, the RNAP catalytic core consists of 2 alpha, 1 beta, 1 beta' and 1 omega subunit. When a sigma factor is associated with the core the holoenzyme is formed, which can initiate transcription.

The catalysed reaction is RNA(n) + a ribonucleoside 5'-triphosphate = RNA(n+1) + diphosphate. DNA-dependent RNA polymerase catalyzes the transcription of DNA into RNA using the four ribonucleoside triphosphates as substrates. The chain is DNA-directed RNA polymerase subunit beta from Bradyrhizobium diazoefficiens (strain JCM 10833 / BCRC 13528 / IAM 13628 / NBRC 14792 / USDA 110).